Here is a 270-residue protein sequence, read N- to C-terminus: Small ribosomal subunit protein eS1 (270 aa).

2 disordered regions span residues 1 to 20 (MAVG…SKKK) and 238 to 270 (GGGK…QESV).

This sequence belongs to the eukaryotic ribosomal protein eS1 family. As to quaternary structure, component of the small ribosomal subunit. Mature ribosomes consist of a small (40S) and a large (60S) subunit. The 40S subunit contains about 33 different proteins and 1 molecule of RNA (18S). The 60S subunit contains about 49 different proteins and 3 molecules of RNA (28S, 5.8S and 5S).

The protein localises to the cytoplasm. This is Small ribosomal subunit protein eS1 from Culex quinquefasciatus (Southern house mosquito).